We begin with the raw amino-acid sequence, 783 residues long: MAACRLCCLCPCLRPLGCGPLGRPGRNRALSYLQMRALWSSTGSRAVTVDLGHRKLEISSGKLARFADGCAVIQSGDTAVMVTAVSKTKASPSQFMPLVVDYRQKAAAAGRIPTNYLRREIGSSDREVLTSRVIDRSIRPLFPAGYFYDTQVLCNLLAVDGINEPDILAVNGASVALSLSDIPWNGPVGAVRIGMIDGECVVNPTRREMSSSTLNLVVAGAPKSQIVMLEASAENILQQDFCHAIKVGVKYTQQIIQGIQQLVKEIGVAKRTPQKIFTPSAEIVKYTKIIAMEKLYAVFTDYEHDKVSRDEAVNKIRLDTEEHLKEKFPEVDQFEIIESFNIVAKEVFRSIILNEYKRCDGRDLTSLRNISCEVDMFKTLHGSALFQRGQTQVLCTVTFDSLESSIKSDQIITAINGVKDKNFMLHYEFPPYATNETGKVTGVNRRELGHGALAEKALCPVIPKDFPFTIRVTSEVLESNGSSSMASACGGSLALMDAGVPISSAVAGVAVGLVTKTNPEKGEIEDYRLLTDILGIEDYNGDMDFKIAGTNKGITALQADIKLPGVPIKIIMEAIQQASVAKKEILQIMNKTISKPRASRKENGPVVETVKVPLSKRAKFVGPGGYHLKKLQAETGVTISQVDEETFSIFAPTPTAMHEARDFITEICRDDQEQQLEFGAVYTATITEIRDTGVMVKLYPNMTAVLLHNSQLDQRKIKHPTALGLEVGQEIQVKYFGRDPADGRMRLSRKVLQSPATTALKTLNDRSSIVMGEPVSQSSNSNP.

Residues 1 to 45 (MAACRLCCLCPCLRPLGCGPLGRPGRNRALSYLQMRALWSSTGSR) constitute a mitochondrion transit peptide. N6-acetyllysine occurs at positions 250, 264, and 285. At K552 the chain carries N6-succinyllysine. The KH domain occupies 605–664 (PVVETVKVPLSKRAKFVGPGGYHLKKLQAETGVTISQVDEETFSIFAPTPTAMHEARDFI). Residues 679–750 (GAVYTATITE…ADGRMRLSRK (72 aa)) enclose the S1 motif domain. S754 is subject to Phosphoserine.

The protein belongs to the polyribonucleotide nucleotidyltransferase family. In terms of assembly, homotrimer; in free form. Homooligomer. Component of the mitochondrial degradosome (mtEXO) complex which is a heteropentamer containing 2 copies of SUPV3L1 and 3 copies of PNPT1. As part of the mitochondrial degradosome complex, interacts with GRSF1 in an RNA-dependent manner; the interaction enhances the activity of the complex. Interacts with TCL1A; the interaction has no effect on PNPT1 exonuclease activity.

It is found in the cytoplasm. Its subcellular location is the mitochondrion matrix. It localises to the mitochondrion intermembrane space. It catalyses the reaction RNA(n+1) + phosphate = RNA(n) + a ribonucleoside 5'-diphosphate. In terms of biological role, RNA-binding protein implicated in numerous RNA metabolic processes. Catalyzes the phosphorolysis of single-stranded polyribonucleotides processively in the 3'-to-5' direction. Mitochondrial intermembrane factor with RNA-processing exoribonulease activity. Component of the mitochondrial degradosome (mtEXO) complex, that degrades 3' overhang double-stranded RNA with a 3'-to-5' directionality in an ATP-dependent manner. Involved in the degradation of non-coding mitochondrial transcripts (MT-ncRNA) and tRNA-like molecules. Required for correct processing and polyadenylation of mitochondrial mRNAs. Plays a role as a cytoplasmic RNA import factor that mediates the translocation of small RNA components, like the 5S RNA, the RNA subunit of ribonuclease P and the mitochondrial RNA-processing (MRP) RNA, into the mitochondrial matrix. Plays a role in mitochondrial morphogenesis and respiration; regulates the expression of the electron transport chain (ETC) components at the mRNA and protein levels. In the cytoplasm, shows a 3'-to-5' exoribonuclease mediating mRNA degradation activity; degrades c-myc mRNA upon treatment with IFNB1/IFN-beta, resulting in a growth arrest in melanoma cells. Regulates the stability of specific mature miRNAs in melanoma cells; specifically and selectively degrades miR-221, preferentially. Also plays a role in RNA cell surveillance by cleaning up oxidized RNAs. Binds to the RNA subunit of ribonuclease P, MRP RNA and miR-221 microRNA. This Mus musculus (Mouse) protein is Polyribonucleotide nucleotidyltransferase 1, mitochondrial (Pnpt1).